A 256-amino-acid polypeptide reads, in one-letter code: Thiazole synthase (256 aa).

The Schiff-base intermediate with DXP role is filled by Lys-96. 1-deoxy-D-xylulose 5-phosphate-binding positions include Gly-157, 183-184 (AG), and 205-206 (NT).

This sequence belongs to the ThiG family. As to quaternary structure, homotetramer. Forms heterodimers with either ThiH or ThiS.

The protein localises to the cytoplasm. It catalyses the reaction [ThiS sulfur-carrier protein]-C-terminal-Gly-aminoethanethioate + 2-iminoacetate + 1-deoxy-D-xylulose 5-phosphate = [ThiS sulfur-carrier protein]-C-terminal Gly-Gly + 2-[(2R,5Z)-2-carboxy-4-methylthiazol-5(2H)-ylidene]ethyl phosphate + 2 H2O + H(+). It participates in cofactor biosynthesis; thiamine diphosphate biosynthesis. In terms of biological role, catalyzes the rearrangement of 1-deoxy-D-xylulose 5-phosphate (DXP) to produce the thiazole phosphate moiety of thiamine. Sulfur is provided by the thiocarboxylate moiety of the carrier protein ThiS. In vitro, sulfur can be provided by H(2)S. This chain is Thiazole synthase, found in Bacillus anthracis.